Reading from the N-terminus, the 205-residue chain is Ras-related and estrogen-regulated growth inhibitor-like protein (205 aa).

Residues 1 to 205 (MSNFLHLKYN…NVFGKRRKSV (205 aa)) form a small GTPase-like region. Residues 11–18 (EKSVSVTK), 58–64 (DPCSQTQ), and 123–126 (NKRD) each bind GTP.

The protein belongs to the small GTPase superfamily. Ras family.

The enzyme catalyses GTP + H2O = GDP + phosphate + H(+). Binds GDP/GTP and may possess intrinsic GTPase activity. The sequence is that of Ras-related and estrogen-regulated growth inhibitor-like protein (RERGL) from Homo sapiens (Human).